The primary structure comprises 160 residues: Heat shock protein beta-6 (160 aa).

An involved in stabilization of the HSPB1:HSBP6 heterodimer region spans residues 1–72 (MEIPVPVQPS…PVAQVPTDPG (72 aa)). A Phosphoserine; by PKA modification is found at Ser-16. In terms of domain architecture, sHSP spans 55–160 (LRAPSVALPV…AQAPPPAAAK (106 aa)). Position 66 is a deamidated glutamine (Gln-66).

This sequence belongs to the small heat shock protein (HSP20) family. As to quaternary structure, homodimer. Small heat shock proteins form high molecular mass oligomers containing variable number of monomers; these oligomers display a very flexible quaternary structure easily exchanging their subunits. Heterooligomer with HSPB1; formed through oligomerization of HSPB1:HSBP6 dimers; subunit exchange leads to formation of at least two different heterooligomeric complexes, differing in variable quantities of HSPB1 and HSPB6 homodimers in addition to HSPB1:HSPB6 heterodimers. Heterooligomer with CRYAB; large heterooligomers consist of CRYAB homodimers and HSPB5:HSPB6 heterodimers but lacking HSPB6 homodimers. Interacts with BAG3. Interacts (phosphorylated) with YWHAZ. Interacts with PDE4A and PDE4D; required for maintenance of the non-phosphorylated state of HSPB6 under basal conditions. Interacts with KDR. Interacts with PRKD1. Post-translationally, the N-terminus is blocked. In terms of processing, phosphorylated at Ser-16 by PKA and probably PKD1K; required to protect cardiomyocytes from apoptosis.

The protein resides in the cytoplasm. Its subcellular location is the nucleus. It is found in the secreted. Small heat shock protein which functions as a molecular chaperone probably maintaining denatured proteins in a folding-competent state. Seems to have versatile functions in various biological processes. Plays a role in regulating muscle function such as smooth muscle vasorelaxation and cardiac myocyte contractility. May regulate myocardial angiogenesis implicating KDR. Overexpression mediates cardioprotection and angiogenesis after induced damage. Stabilizes monomeric YWHAZ thereby supporting YWHAZ chaperone-like activity. The chain is Heat shock protein beta-6 (HSPB6) from Homo sapiens (Human).